Here is a 375-residue protein sequence, read N- to C-terminus: DnaJ homolog subfamily B member 12 (375 aa).

N-acetylmethionine is present on Met-1. Residues 1–243 are Cytoplasmic-facing; sequence MESNKDEAER…DRRDNQGDGG (243 aa). The disordered stretch occupies residues 45 to 92; that stretch reads ALIESLNQKPQTAGDQPPPTDTTHATHRKAGGTDAPSANGEAGGESTK. Positions 49–58 are enriched in polar residues; sequence SLNQKPQTAG. The J domain occupies 112-176; the sequence is YEILGVSRGA…RKQYDQFGDD (65 aa). His-185 carries the pros-methylhistidine modification. The helical transmembrane segment at 244–264 threads the bilayer; that stretch reads LGVFVQLMPILILILVSALSQ. Topologically, residues 265–375 are lumenal; it reads LMVSSPPYSL…LSEVQASLHG (111 aa).

It belongs to the DnaJ family. DNAJB12/DNAJB14 subfamily. Homodimer and homotetramer. Interacts (via J domain) with HSPA8/Hsc70. Forms a multiprotein complex, at least composed of DNAJB12, DNAJB14, HSPA8/Hsc70 and SGTA; interaction with DNAJB14 and HSPA8/Hsc70 is direct. In terms of processing, methylated at His-185 by METTL9.

It localises to the endoplasmic reticulum membrane. Its subcellular location is the nucleus membrane. In terms of biological role, acts as a co-chaperone with HSPA8/Hsc70; required to promote protein folding and trafficking, prevent aggregation of client proteins, and promote unfolded proteins to endoplasmic reticulum-associated degradation (ERAD) pathway. Acts by determining HSPA8/Hsc70's ATPase and polypeptide-binding activities. Can also act independently of HSPA8/Hsc70: together with DNAJB14, acts as a chaperone that promotes maturation of potassium channels KCND2 and KCNH2 by stabilizing nascent channel subunits and assembling them into tetramers. While stabilization of nascent channel proteins is dependent on HSPA8/Hsc70, the process of oligomerization of channel subunits is independent of HSPA8/Hsc70. When overexpressed, forms membranous structures together with DNAJB14 and HSPA8/Hsc70 within the nucleus; the role of these structures, named DJANGOs, is still unclear. Its function is as follows. (Microbial infection) In case of infection by polyomavirus, involved in the virus endoplasmic reticulum membrane penetration and infection. The sequence is that of DnaJ homolog subfamily B member 12 from Homo sapiens (Human).